Here is a 134-residue protein sequence, read N- to C-terminus: MHIALIAHDEKKDLMVGFATAYKHLLEPHQLYATGTTGLRIIEATGLTVHRFKSGPLGGDQQIGARISENKMDLVIFLRDPLTAQPHEPDVSALIRLCDVYEIPLATNIGTAEILIRGLGAGFLDWRDLRRNDE.

An MGS-like domain is found at 1-134 (MHIALIAHDE…DWRDLRRNDE (134 aa)). Substrate-binding positions include His-8, Lys-12, 34-37 (TGTT), and 54-55 (SG). Residue Asp-60 is the Proton donor/acceptor of the active site. Residue His-87 participates in substrate binding.

The protein belongs to the methylglyoxal synthase family.

The enzyme catalyses dihydroxyacetone phosphate = methylglyoxal + phosphate. In terms of biological role, catalyzes the formation of methylglyoxal from dihydroxyacetone phosphate. The chain is Methylglyoxal synthase from Listeria innocua serovar 6a (strain ATCC BAA-680 / CLIP 11262).